Reading from the N-terminus, the 1232-residue chain is Anoctamin-8 (1232 aa).

The interval 1-32 (MAEAASGAGGTSLEGERGKRPPPEGEPAAPAS) is disordered. Position 2 is an N-acetylalanine (Ala-2). Over 2 to 244 (AEAASGAGGT…DDICDYFGVK (243 aa)) the chain is Extracellular. The span at 14-23 (EGERGKRPPP) shows a compositional bias: basic and acidic residues. A helical membrane pass occupies residues 245-265 (IAMYFAWLGFYTSAMVYPAVF). Residues 266 to 281 (GSVLYTFTEADQTSRD) are Cytoplasmic-facing. The helical transmembrane segment at 282–302 (VSCVVFALFNVIWSTLFLEEW) threads the bilayer. Residues 303–356 (KRRGAELAYKWGTLDSPGEAVEEPRPQFRGVRRISPITRAEEFYYPPWKRLLFQ) are Extracellular-facing. Ser-318 carries the post-translational modification Phosphoserine. The chain crosses the membrane as a helical span at residues 357–377 (LLVSLPLCLACLVCVFLLMLG). The Cytoplasmic segment spans residues 378–400 (CFQLQELVLSVKGLPRLARFLPK). The helical transmembrane segment at 401 to 421 (VMLALLVSVSAEGYKKLAIWL) threads the bilayer. At 422 to 437 (NDMENYRLESAYEKHL) the chain is on the extracellular side. The helical transmembrane segment at 438–458 (IIKVVLFQFVNSYLSLFYIGF) threads the bilayer. The Cytoplasmic segment spans residues 459 to 750 (YLKDMERLKE…YEDTFQDYQE (292 aa)). Residues 524 to 650 (RRLEPQADEG…SPTMVEKGLE (127 aa)) form a disordered region. Residues 532 to 551 (EGGGGGSGGGGRRCLSGGCG) show a composition bias toward gly residues. Positions 582 to 606 (EEDEDDEEEEDEEEEEDEEEGEEGG) are enriched in acidic residues. Ser-669 carries the phosphoserine modification. Residues 681–728 (RAGGEGRDQGPDGGPDPEPGSNSDSTRRQRRQNRSSWIDPPEEEHSPQ) are disordered. Residues 751–771 (MFVQFGYVVLFSSAFPLAALC) traverse the membrane as a helical segment. The Extracellular portion of the chain corresponds to 772-807 (ALVNNLIEIRSDAFKLCTGLQRPFGQRVESIGQWQK). Ser-801 carries the phosphoserine; by FAM20C modification. A helical membrane pass occupies residues 808–828 (VMEAMGVLAIVVNCYLIGQCG). Over 829-841 (QLQRLFPWLSPEA) the chain is Cytoplasmic. The chain crosses the membrane as a helical span at residues 842–862 (AIVSVVVLEHFALLLKYLIHV). Residues 863–1232 (AIPDIPGWVA…QAVCWPSGWH (370 aa)) lie on the Extracellular side of the membrane. Disordered regions lie at residues 888–970 (RHER…GSLL), 997–1152 (LAAA…WQWD), and 1174–1232 (PPCA…SGWH). A compositionally biased stretch (basic and acidic residues) spans 904–932 (RREEEERQRHAEHHARREHDSGGREEARA). Low complexity-rich tracts occupy residues 933–953 (EGSGLDPATSSEKASAKAKGS) and 997–1006 (LAAAGAGATT). The residue at position 1020 (Arg-1020) is an Asymmetric dimethylarginine; alternate. An Omega-N-methylarginine; alternate modification is found at Arg-1020. Residues 1031–1043 (KSPETRRDSERSH) are compositionally biased toward basic and acidic residues. A compositionally biased stretch (polar residues) spans 1078–1087 (TPSSGSSRVQ). Pro residues-rich tracts occupy residues 1130 to 1145 (PAPPPPMPLPRPPTPP) and 1197 to 1221 (LPPPPLPPTSDPLETPAPSPSPSPS).

It belongs to the anoctamin family. In terms of tissue distribution, expressed in embryonic stem cells, fetal brain and neural tissues.

Its subcellular location is the cell membrane. Its function is as follows. Does not exhibit calcium-activated chloride channel (CaCC) activity. The chain is Anoctamin-8 (ANO8) from Homo sapiens (Human).